The sequence spans 467 residues: 3-isopropylmalate dehydratase large subunit (467 aa).

Residues Cys-347, Cys-407, and Cys-410 each contribute to the [4Fe-4S] cluster site.

It belongs to the aconitase/IPM isomerase family. LeuC type 1 subfamily. In terms of assembly, heterodimer of LeuC and LeuD. It depends on [4Fe-4S] cluster as a cofactor.

It catalyses the reaction (2R,3S)-3-isopropylmalate = (2S)-2-isopropylmalate. The protein operates within amino-acid biosynthesis; L-leucine biosynthesis; L-leucine from 3-methyl-2-oxobutanoate: step 2/4. Catalyzes the isomerization between 2-isopropylmalate and 3-isopropylmalate, via the formation of 2-isopropylmaleate. This is 3-isopropylmalate dehydratase large subunit from Gloeothece citriformis (strain PCC 7424) (Cyanothece sp. (strain PCC 7424)).